The sequence spans 625 residues: Pyriculol/pyriculariol biosynthesis cluster transcription factor 1 (625 aa).

Disordered regions lie at residues 1-83 (MATE…ATQD) and 466-496 (PMSA…LPAS). Residues 46–59 (TPSPSTPANPNSAS) are compositionally biased toward low complexity. The homeobox DNA-binding region spans 73-132 (KNQKRQRATQDQLTTLEQEFAKNPTPTATVRDRIAEEINMTERSVQIWFQNRRAKIKLMA). The segment covering 467–496 (MSATTAPSPSEYNSPSFFSQAPENTPLPAS) has biased composition (polar residues).

It is found in the nucleus. Transcriptional regulator; part of the gene cluster that mediates the biosynthesis of pyriculol and pyriculariol, two heptaketides that induce lesion formation upon application on rice leaves but are dispensable for pathogenicity. With TRF1, negatively regulates the expression of the gene cluster and the subsequent pyriculol and pyriculariol production. This is Pyriculol/pyriculariol biosynthesis cluster transcription factor 1 from Pyricularia oryzae (strain 70-15 / ATCC MYA-4617 / FGSC 8958) (Rice blast fungus).